Consider the following 1319-residue polypeptide: MDSTSKRSSFKRARGGRATVYFYVPTWQHGPGGQPPVSSFAFSLVNEVGFGVLFDYGCAGTGGATAGRAAAAVDPGVASEAFMEILRTVLPGHRVGAVSELPAGLGSYLTSGDDGAGGPCTLSRDVAPMMQALLEHLIRGQQQLRRPLVGDAGEGAGRGPGEGEATTPIPKILAVSFFHTLWSLHSIKQHHAYMLCNQLSSPASFCRTPGYLGFTPLGDPGERPDLKFARVPVPALAHPKADALAKLPEMFREHDSDVLTGTHRGAIKIRNPFNGLLGYLCRLYAPTSRVFIDRDVFSSNGKPDYFGVVYQVGGISTGASELDLLYSEAGTFGWGNVLGLHLGVVGSGEDPFALQEYLESHMLAQRCSGAPTLLGFVRVMDGSAAPPGMGPASRPHSFTGATRASIISPKACLSPVRGGGASVFMLGDFFQRPQRAGGAYASHDSGRRLASILAAVQTFINVAGGRAVLSTCQSRLEGTMHAKIAAACGVMGLKTYTSLLPEEAVSELSHFSPGNASMNRSILLSKFLNVEAQVVLLTVVNTPRNRQILEGVFKTFGCRVSLLGHLARAKKIVLYDDRSPDYCQGGPRYLCFKMHKPRYALPIDRWCGTASYRPTAPSRVPYNSSDAGPPSDAREVLLGILRHPTVGCKNYIVKHVDRCASGRVAQQCGVGPLDLPVADYSMVVVEPSAGPPSSMEPWTWETPQVPDDCFLIHEDGVSGVCSALGEKNSVFPFYPEAGAKMAIAESVLSLALAPIARIEDVTVNLSLAWPHLKGAQGEVFTLLTRCKRFCEDAGVSCNVTSCASSRRAGGGDPPEGGADIKSFVASAFAYTPCAFWKLTPDLKEARSVILFLPASPGKHAFASVYQQVRGQKKYTGSPVNISGAYLGKLARAVLHLRAKRLAVSGHDVGDGGLWAALAEMAMAGMRSLDVEVPVRLDGDPMGFLTSETPGVALEVPLSSASAAVEYLRSKYILCYRVGVTGHKTCERMFRITRGDQVLLECEQEEVGEAWRSHSVRMERYGPCFNRHAYGEGPYEREREAFLAYTPFRILNRPNKKHRVAVLLLPGCPYPLAALDALRDSGFDALAVSHLDLAHVLTDEVCGLFVAGVDNTSDTKTSDALTSALVHSRNPGVIRDFLSRKDTFSLGVGSMACRILFDGDMAVSPALQSRDIRCVPAVSCKFESRWLNVFINQSTPAVAFRTLRGSLLPCWAQGTHLGFGAPSPECLDRLVASGQAASMFYGSDVASGPAMAYPANPTETLPVAGICSRDGRHLVLLHDITASYYLWQWPHVPKSNIPIAVSPWKQVFYDLHAWVTAHSH.

It localises to the virion tegument. This is Probable membrane antigen 3 (3) from Equine herpesvirus 2 (strain 86/87) (EHV-2).